The chain runs to 201 residues: MNSVRTADVKRTTKETEVEVSVNLDGSGRAKVDTGLPFFDHLLHQFAFHGRIDVEIKARGDLEVDDHHTVEDVGICLGKALNEALGDREGIRRIAWALVPMDEALVECAVDISGRPYFVLKGYRPRRNRIGSPPLSTENVSHFWKSFCDHAGVTMHVVVRWWDNDHHAIEAMFKAVGRALGAAKEIVGDGVPSTKGTLRRG.

The protein belongs to the imidazoleglycerol-phosphate dehydratase family.

It localises to the cytoplasm. The catalysed reaction is D-erythro-1-(imidazol-4-yl)glycerol 3-phosphate = 3-(imidazol-4-yl)-2-oxopropyl phosphate + H2O. The protein operates within amino-acid biosynthesis; L-histidine biosynthesis; L-histidine from 5-phospho-alpha-D-ribose 1-diphosphate: step 6/9. In Methanopyrus kandleri (strain AV19 / DSM 6324 / JCM 9639 / NBRC 100938), this protein is Imidazoleglycerol-phosphate dehydratase.